The sequence spans 230 residues: tRNA (cytidine-2'-O-)-methyltransferase TrmJ (230 aa).

S-adenosyl-L-methionine-binding positions include 79–81 (TSG), Gly-115, Ile-135, and 142–144 (PIM).

It belongs to the class IV-like SAM-binding methyltransferase superfamily. RNA methyltransferase TrmH family. Homodimer.

Its subcellular location is the cytoplasm. It catalyses the reaction cytidine(32) in tRNA + S-adenosyl-L-methionine = 2'-O-methylcytidine(32) in tRNA + S-adenosyl-L-homocysteine + H(+). Its function is as follows. Catalyzes the formation of 2'O-methylated cytidine (Cm32) at position 32 in tRNA. The protein is tRNA (cytidine-2'-O-)-methyltransferase TrmJ of Methanocaldococcus jannaschii (strain ATCC 43067 / DSM 2661 / JAL-1 / JCM 10045 / NBRC 100440) (Methanococcus jannaschii).